We begin with the raw amino-acid sequence, 539 residues long: MNRQFTCKPGVANRGFSGCSAVLSGGSSSSYRAAGKGLSGGFSSRSLYSLRSPRSISFNVASSSGRTGGYGFGRNRASGFAGSMFGSGALGPSNPSLCLPGGIHQVTVNKSLLAPLNVELDPEIQKVRAQEREQIKALNNKFASFIDKVRFLEQQNQVLQTKWELLQQLDLSNCRRNLEPVYEAHISSLQKQLDSLSGDRVRLDSELRGMRDAVEDCKKRYEEEINKRTTAENEFVVLKKDVDAAYMSKVELQAKVDALDGEIKFLKCLYEGEITQMQSHISDTSVVLSMDNNRNLDLDSIIAEVRAQYEDIALKSKAEAEMVYQTKFQELQLAAGRHGDDLKHTRNEISELTRLIQRLRSEIESVKKQCSNLETAIADAEQRGDCALKDARAKLDELERALHQAKEELARMLREHQELMSMKLALDIEIATYRKLLEGEECRMSGEHTSAVSISVISSSAPGTVGAGTSFGFSSAGTYGYRQSSVAGGYGILSGGCVTGSGNCSPRGDTKNRLGSASEFKEVSGKTLALGSPSKKTMR.

Positions 1-130 are head; the sequence is MNRQFTCKPG…DPEIQKVRAQ (130 aa). The interval 131 to 166 is coil 1A; sequence EREQIKALNNKFASFIDKVRFLEQQNQVLQTKWELL. In terms of domain architecture, IF rod spans 131-444; that stretch reads EREQIKALNN…KLLEGEECRM (314 aa). A linker 1 region spans residues 167–185; sequence QQLDLSNCRRNLEPVYEAH. The coil 1B stretch occupies residues 186–277; sequence ISSLQKQLDS…CLYEGEITQM (92 aa). The linker 12 stretch occupies residues 278-301; the sequence is QSHISDTSVVLSMDNNRNLDLDSI. The interval 302-440 is coil 2; sequence IAEVRAQYED…ATYRKLLEGE (139 aa). Residues 441 to 539 form a tail region; the sequence is ECRMSGEHTS…LGSPSKKTMR (99 aa).

This sequence belongs to the intermediate filament family. As to quaternary structure, heterotetramer of two type I and two type II keratins.

Functionally, has a role in hair formation. Specific component of keratin intermediate filaments in the inner root sheath (IRS) of the hair follicle. The sequence is that of Keratin, type II cytoskeletal 73 (Krt73) from Mus musculus (Mouse).